The chain runs to 118 residues: Large ribosomal subunit protein uL18 (118 aa).

It belongs to the universal ribosomal protein uL18 family. Part of the 50S ribosomal subunit; part of the 5S rRNA/L5/L18/L25 subcomplex. Contacts the 5S and 23S rRNAs.

Its function is as follows. This is one of the proteins that bind and probably mediate the attachment of the 5S RNA into the large ribosomal subunit, where it forms part of the central protuberance. The polypeptide is Large ribosomal subunit protein uL18 (Rickettsia peacockii (strain Rustic)).